The following is a 255-amino-acid chain: Proteasome subunit alpha type-3 (255 aa).

An N-acetylserine modification is found at Ser-2. N6-acetyllysine is present on residues Lys-57, Lys-206, and Lys-230. Phosphoserine is present on residues Ser-243 and Ser-250.

This sequence belongs to the peptidase T1A family. In terms of assembly, the 26S proteasome consists of a 20S proteasome core and two 19S regulatory subunits. The 20S proteasome core is a barrel-shaped complex made of 28 subunits that are arranged in four stacked rings. The two outer rings are each formed by seven alpha subunits, and the two inner rings are formed by seven beta subunits. The proteolytic activity is exerted by three beta-subunits PSMB5, PSMB6 and PSMB7. Interacts with AURKB. Interacts with CDKN1A. Interacts with MDM2 and RB1. Interacts with the C-terminus of TBXA2R isoform 2. Interacts with DNAJB2. (Microbial infection) Interacts with HIV-1 Tat protein. As to quaternary structure, (Microbial infection) Interacts with hepatitis C virus (HCV) F protein. In terms of assembly, (Microbial infection) Interacts with Epstein-Barr virus EBNA3 proteins.

It localises to the cytoplasm. It is found in the nucleus. Component of the 20S core proteasome complex involved in the proteolytic degradation of most intracellular proteins. This complex plays numerous essential roles within the cell by associating with different regulatory particles. Associated with two 19S regulatory particles, forms the 26S proteasome and thus participates in the ATP-dependent degradation of ubiquitinated proteins. The 26S proteasome plays a key role in the maintenance of protein homeostasis by removing misfolded or damaged proteins that could impair cellular functions, and by removing proteins whose functions are no longer required. Associated with the PA200 or PA28, the 20S proteasome mediates ubiquitin-independent protein degradation. This type of proteolysis is required in several pathways including spermatogenesis (20S-PA200 complex) or generation of a subset of MHC class I-presented antigenic peptides (20S-PA28 complex). Binds to the C-terminus of CDKN1A and thereby mediates its degradation. Negatively regulates the membrane trafficking of the cell-surface thromboxane A2 receptor (TBXA2R) isoform 2. The sequence is that of Proteasome subunit alpha type-3 from Homo sapiens (Human).